The following is a 305-amino-acid chain: PI protein (305 aa).

The protein belongs to the initiator RepB protein family. As to quaternary structure, homodimer.

Initiation for plasmid R6K DNA replication. The chain is PI protein (pir) from Escherichia coli.